The chain runs to 190 residues: Holliday junction branch migration complex subunit RuvA (190 aa).

The tract at residues 1-64 (MIGKLSGTLD…EDAQILYGFA (64 aa)) is domain I. Residues 65–137 (TSQERAAFRE…LKGKLGPDIG (73 aa)) are domain II. The flexible linker stretch occupies residues 137–141 (GVAAS). A domain III region spans residues 142-190 (VANDSQADILQALLALGYSDKEAAAALKALPSDVGVSEGIRLALRALGK).

The protein belongs to the RuvA family. Homotetramer. Forms an RuvA(8)-RuvB(12)-Holliday junction (HJ) complex. HJ DNA is sandwiched between 2 RuvA tetramers; dsDNA enters through RuvA and exits via RuvB. An RuvB hexamer assembles on each DNA strand where it exits the tetramer. Each RuvB hexamer is contacted by two RuvA subunits (via domain III) on 2 adjacent RuvB subunits; this complex drives branch migration. In the full resolvosome a probable DNA-RuvA(4)-RuvB(12)-RuvC(2) complex forms which resolves the HJ.

It localises to the cytoplasm. The RuvA-RuvB-RuvC complex processes Holliday junction (HJ) DNA during genetic recombination and DNA repair, while the RuvA-RuvB complex plays an important role in the rescue of blocked DNA replication forks via replication fork reversal (RFR). RuvA specifically binds to HJ cruciform DNA, conferring on it an open structure. The RuvB hexamer acts as an ATP-dependent pump, pulling dsDNA into and through the RuvAB complex. HJ branch migration allows RuvC to scan DNA until it finds its consensus sequence, where it cleaves and resolves the cruciform DNA. This Albidiferax ferrireducens (strain ATCC BAA-621 / DSM 15236 / T118) (Rhodoferax ferrireducens) protein is Holliday junction branch migration complex subunit RuvA.